A 343-amino-acid polypeptide reads, in one-letter code: Nuclear distribution protein nudE-like 1 (343 aa).

The stretch at 25–190 (KYKQSFQEAR…LAVRERQQEV (166 aa)) forms a coiled coil. Disordered stretches follow at residues 184-204 (RERQQEVTRKSAPSSPTLDCE) and 322-343 (QGTPGLGASRPSSAPGMLPLSV).

The protein belongs to the nudE family. In terms of processing, phosphorylated in mitosis.

The protein resides in the cytoplasm. It is found in the cytoskeleton. The protein localises to the microtubule organizing center. It localises to the centrosome. Its subcellular location is the spindle. Its function is as follows. Required for organization of the cellular microtubule array and microtubule anchoring at the centrosome. Positively regulates the activity of the minus-end directed microtubule motor protein dynein. May enhance dynein-mediated microtubule sliding by targeting dynein to the microtubule plus end. Positively regulates lysosome peripheral distribution and ruffled border formation in osteoclasts. This is Nuclear distribution protein nudE-like 1 (NDEL1) from Gallus gallus (Chicken).